Reading from the N-terminus, the 192-residue chain is dTTP/UTP pyrophosphatase (192 aa).

The active-site Proton acceptor is Asp75.

The protein belongs to the Maf family. YhdE subfamily. A divalent metal cation serves as cofactor.

The protein localises to the cytoplasm. It carries out the reaction dTTP + H2O = dTMP + diphosphate + H(+). The catalysed reaction is UTP + H2O = UMP + diphosphate + H(+). Nucleoside triphosphate pyrophosphatase that hydrolyzes dTTP and UTP. May have a dual role in cell division arrest and in preventing the incorporation of modified nucleotides into cellular nucleic acids. This chain is dTTP/UTP pyrophosphatase, found in Bdellovibrio bacteriovorus (strain ATCC 15356 / DSM 50701 / NCIMB 9529 / HD100).